We begin with the raw amino-acid sequence, 20 residues long: Maximin-Ht (20 aa).

This sequence belongs to the bombinin family. Expressed by the skin glands.

It localises to the secreted. Its function is as follows. Has antimicrobial activity. The polypeptide is Maximin-Ht (Bombina maxima (Giant fire-bellied toad)).